We begin with the raw amino-acid sequence, 293 residues long: Coatomer subunit epsilon-2 (293 aa).

This sequence belongs to the COPE family. In terms of assembly, oligomeric complex that consists of at least the alpha, beta, beta', gamma, delta, epsilon and zeta subunits.

It localises to the cytoplasm. The protein resides in the golgi apparatus membrane. It is found in the cytoplasmic vesicle. The protein localises to the COPI-coated vesicle membrane. The coatomer is a cytosolic protein complex that binds to dilysine motifs and reversibly associates with Golgi non-clathrin-coated vesicles, which further mediate biosynthetic protein transport from the ER, via the Golgi up to the trans Golgi network. The coatomer complex is required for budding from Golgi membranes, and is essential for the retrograde Golgi-to-ER transport of dilysine-tagged proteins. This is Coatomer subunit epsilon-2 from Arabidopsis thaliana (Mouse-ear cress).